The following is a 465-amino-acid chain: Ribulose bisphosphate carboxylase large chain (465 aa).

K4 carries the post-translational modification N6,N6,N6-trimethyllysine. Residues N113 and T163 each coordinate substrate. The active-site Proton acceptor is the K165. K167 is a substrate binding site. Residues K191, D193, and E194 each coordinate Mg(2+). The residue at position 191 (K191) is an N6-carboxylysine. H284 serves as the catalytic Proton acceptor. Positions 285, 317, and 369 each coordinate substrate.

It belongs to the RuBisCO large chain family. Type I subfamily. As to quaternary structure, heterohexadecamer of 8 large chains and 8 small chains; disulfide-linked. The disulfide link is formed within the large subunit homodimers. It depends on Mg(2+) as a cofactor. Post-translationally, the disulfide bond which can form in the large chain dimeric partners within the hexadecamer appears to be associated with oxidative stress and protein turnover.

It is found in the plastid. The protein localises to the chloroplast. The enzyme catalyses 2 (2R)-3-phosphoglycerate + 2 H(+) = D-ribulose 1,5-bisphosphate + CO2 + H2O. It carries out the reaction D-ribulose 1,5-bisphosphate + O2 = 2-phosphoglycolate + (2R)-3-phosphoglycerate + 2 H(+). Functionally, ruBisCO catalyzes two reactions: the carboxylation of D-ribulose 1,5-bisphosphate, the primary event in carbon dioxide fixation, as well as the oxidative fragmentation of the pentose substrate in the photorespiration process. Both reactions occur simultaneously and in competition at the same active site. In Nepenthes alata (Winged pitcher plant), this protein is Ribulose bisphosphate carboxylase large chain.